A 159-amino-acid polypeptide reads, in one-letter code: RNA pyrophosphohydrolase (159 aa).

Residues 6–149 (GFRPNVGIIL…KREVYRRALK (144 aa)) form the Nudix hydrolase domain. Residues 38–59 (GGINARETPEEALFRELNEEVG) carry the Nudix box motif.

The protein belongs to the Nudix hydrolase family. RppH subfamily. It depends on a divalent metal cation as a cofactor.

Functionally, accelerates the degradation of transcripts by removing pyrophosphate from the 5'-end of triphosphorylated RNA, leading to a more labile monophosphorylated state that can stimulate subsequent ribonuclease cleavage. The polypeptide is RNA pyrophosphohydrolase (Stutzerimonas stutzeri (strain A1501) (Pseudomonas stutzeri)).